A 53-amino-acid chain; its full sequence is MLRWAVIFLVIALVAAVLGFGGIAGSAAGIAKIIFFVFLVLLVISVVMGRRKV.

The next 2 membrane-spanning stretches (helical) occupy residues 4–24 and 28–48; these read WAVIFLVIALVAAVLGFGGIA and AGIAKIIFFVFLVLLVISVVM.

It belongs to the UPF0391 family.

It localises to the cell membrane. The polypeptide is UPF0391 membrane protein Patl_1732 (Pseudoalteromonas atlantica (strain T6c / ATCC BAA-1087)).